Reading from the N-terminus, the 349-residue chain is DNA replication and repair protein RecF (349 aa).

An ATP-binding site is contributed by 30 to 37; sequence GKNGSGKT.

It belongs to the RecF family.

Its subcellular location is the cytoplasm. Functionally, the RecF protein is involved in DNA metabolism; it is required for DNA replication and normal SOS inducibility. RecF binds preferentially to single-stranded, linear DNA. It also seems to bind ATP. The polypeptide is DNA replication and repair protein RecF (Francisella tularensis subsp. holarctica (strain FTNF002-00 / FTA)).